Consider the following 602-residue polypeptide: Na(+)/dicarboxylate cotransporter 3 (602 aa).

Residues 1-16 (MAALAAAAKKVWSARR) lie on the Cytoplasmic side of the membrane. The chain crosses the membrane as a helical span at residues 17–37 (LLVLLFTPLALLPVVFALPPK). Residues 38-55 (EGRCLFVILLMAVYWCTE) are Extracellular-facing. Residues 56-76 (ALPLSVTALLPIVLFPFMGIL) traverse the membrane as a helical segment. The Cytoplasmic portion of the chain corresponds to 77 to 82 (PSNKVC). The chain crosses the membrane as a helical span at residues 83–103 (PQYFLDTNFLFLSGLIMASAI). Residues 104–137 (EEWNLHRRIALKILMLVGVQPARLILGMMVTTSF) lie on the Extracellular side of the membrane. A helical transmembrane segment spans residues 138-158 (LSMWLSNTASTAMMLPIANAI). The Cytoplasmic segment spans residues 159–229 (LKSLFGQKEV…SRKEDEYRRN (71 aa)). The helical transmembrane segment at 230–250 (IWKGFLISIPYSASIGGTATL) threads the bilayer. At 251–278 (TGTAPNLILLGQLKSFFPQCDVVNFGSW) the chain is on the extracellular side. The helical transmembrane segment at 279–299 (FIFAFPLMLLFLLAGWLWISF) threads the bilayer. At 300–336 (LYGGLSFRGWRKNKSEIRTNAEDRARAVIREEYQNLG) the chain is on the cytoplasmic side. A helical transmembrane segment spans residues 337 to 357 (PIKFAEQAVFILFCMFAILLF). The Extracellular segment spans residues 358–372 (TRDPKFIPGWASLFN). Residues 373–393 (PGFLSDAVTGVAIVTILFFFP) form a helical membrane-spanning segment. Over 394–422 (SQRPSLKWWFDFKAPNTETEPLLTWKKAQ) the chain is Cytoplasmic. An intramembrane region (helical) is located at residues 423–443 (ETVPWNIILLLGGGFAMAKGC). The Cytoplasmic portion of the chain corresponds to 444–461 (EESGLSVWIGGQLHPLEN). Residues 462–482 (VPPALAVLLITVVIAFFTEFA) traverse the membrane as a helical segment. Topologically, residues 483 to 505 (SNTATIIIFLPVLAELAIRLRVH) are extracellular. Residues 506-526 (PLYLMIPGTVGCSFAFMLPVS) traverse the membrane as a helical segment. At 527–546 (TPPNSIAFASGHLLVKDMVR) the chain is on the cytoplasmic side. Residues 547–567 (TGLLMNLMGVLLLSLAMNTWA) form a helical membrane-spanning segment. At 568–602 (QTIFQLGTFPDWADMYSVNVTALPPTLANDTFRTL) the chain is on the extracellular side. Asparagine 586 and asparagine 596 each carry an N-linked (GlcNAc...) asparagine glycan.

This sequence belongs to the SLC13A/DASS transporter (TC 2.A.47) family. NADC subfamily. In terms of tissue distribution, expression is highest in kidney. Detected in placenta, brain, liver and pancreas.

The protein resides in the cell membrane. The enzyme catalyses succinate(out) + 3 Na(+)(out) = succinate(in) + 3 Na(+)(in). It catalyses the reaction 2-oxoglutarate(out) + 3 Na(+)(out) = 2-oxoglutarate(in) + 3 Na(+)(in). The catalysed reaction is N-acetyl-L-aspartate(out) + 3 Na(+)(out) = N-acetyl-L-aspartate(in) + 3 Na(+)(in). It carries out the reaction glutarate(out) + 3 Na(+)(out) = glutarate(in) + 3 Na(+)(in). The enzyme catalyses fumarate(out) + 3 Na(+)(out) = fumarate(in) + 3 Na(+)(in). It catalyses the reaction malate(out) + 3 Na(+)(out) = malate(in) + 3 Na(+)(in). The catalysed reaction is 2,2-dimethylsuccinate(out) + 3 Na(+)(out) = 2,2-dimethylsuccinate(in) + 3 Na(+)(in). It carries out the reaction 2,3-dimethylsuccinate(out) + 3 Na(+)(out) = 2,3-dimethylsuccinate(in) + 3 Na(+)(in). The enzyme catalyses itaconate(out) + 3 Na(+)(out) = itaconate(in) + 3 Na(+)(in). Its activity is regulated as follows. Li(+) decreases succinate transport in the presence of Na(+). In terms of biological role, high-affinity sodium-dicarboxylate cotransporter that accepts a range of substrates with 4-6 carbon atoms, such as the citric acid cycle intermediates succinate and alpha-ketoglutarate (2-oxoglutarate), as well as other compounds including N-acetyl-L-aspartate. Transports the dicarboxylate into the cell with a probable stoichiometry of 3 Na(+) for 1 divalent dicarboxylate, rendering the process electrogenic. Can transport citrate in a Na(+)-dependent manner, recognizing the divalent form of citrate rather than the trivalent form which is normally found in blood. Imports itaconate in hepatocytes leading to activation of TFEB-dependent lysosomal biogenesis involved in antibacterial innate immune response. This is Na(+)/dicarboxylate cotransporter 3 (SLC13A3) from Homo sapiens (Human).